We begin with the raw amino-acid sequence, 523 residues long: Asc-type amino acid transporter 1 (523 aa).

The tract at residues 1–28 is disordered; that stretch reads MAGHTQQPSGRGNPRPAPSPSPVPGTVP. Over residues 15–25 the composition is skewed to pro residues; that stretch reads RPAPSPSPVPG. 9 consecutive transmembrane segments (helical) span residues 40–60, 72–92, 113–133, 268–288, 310–330, 362–382, 388–408, 424–444, and 448–468; these read IGLL…GIFI, VGLA…GSLC, IFGG…MYPT, AIFI…IAYF, LLGY…FGGI, CTPI…MLVG, INYV…GLLL, LLIP…SFIS, and VCGV…LGVF. Residues 499-523 form a disordered region; the sequence is APEEEENGPCPPSLLPATDKPSKPQ.

The protein belongs to the amino acid-polyamine-organocation (APC) superfamily. In terms of assembly, disulfide-linked heterodimer with the amino acid transport protein SLC3A2/4F2hc. Expressed in brain, heart, kidney, liver, lung, pancreas, placenta, and skeletal muscle.

It is found in the cell membrane. The enzyme catalyses L-alanine(in) + glycine(out) = L-alanine(out) + glycine(in). The catalysed reaction is L-serine(out) + L-alanine(in) = L-serine(in) + L-alanine(out). It catalyses the reaction L-threonine(out) + L-alanine(in) = L-threonine(in) + L-alanine(out). It carries out the reaction L-cysteine(out) + L-alanine(in) = L-cysteine(in) + L-alanine(out). The enzyme catalyses 2-aminoisobutanoate(out) + L-alanine(in) = 2-aminoisobutanoate(in) + L-alanine(out). The catalysed reaction is D-serine(out) + L-alanine(in) = D-serine(in) + L-alanine(out). It catalyses the reaction D-alanine(out) + L-alanine(in) = D-alanine(in) + L-alanine(out). It carries out the reaction L-valine(out) + L-alanine(in) = L-valine(in) + L-alanine(out). The enzyme catalyses L-methionine(out) + L-alanine(in) = L-methionine(in) + L-alanine(out). The catalysed reaction is beta-alanine(out) + L-alanine(in) = beta-alanine(in) + L-alanine(out). It catalyses the reaction D-cysteine(out) + L-alanine(in) = D-cysteine(in) + L-alanine(out). It carries out the reaction D-threonine(out) + L-alanine(in) = D-threonine(in) + L-alanine(out). The enzyme catalyses D-isoleucine(out) + D-serine(in) = D-isoleucine(in) + D-serine(out). The catalysed reaction is D-serine(in) = D-serine(out). Functionally, associates with SLC3A2/4F2hc to form a functional heterodimeric complex that translocates small neutral L- and D-amino acids across the plasma membrane. Preferentially mediates exchange transport, but can also operate via facilitated diffusion. Acts as a major transporter for glycine, L- and D-serine in the central nervous system. At the spinal cord and brainstem regulates glycine metabolism and glycinergic inhibitory neurotransmission by providing for glycine de novo synthesis from L-serine and glycine recycling from astrocytes to glycinergic motor neurons. At Schaffer collateral-CA1 synapses mediates D-serine and glycine release that modulates post-synaptic activation of NMDA receptors and excitatory glutamatergic transmission. May regulate D-serine release from mesenchymal progenitors located in developing subcutaneous adipose tissue, favoring white adipocyte over thermogenic beige adipocyte lineage commitment. This Homo sapiens (Human) protein is Asc-type amino acid transporter 1 (SLC7A10).